The sequence spans 282 residues: MDCSICTTMPSILRPPRNTICGSCYEGARTTIALLKKLEGSKEDRHDKSNHNSTINNGSSISSSPLFSCEPQPLEKVIKWMKNMKETEEEQKKRIVFLSSFVSGFKEQLHADILLKPGDDGPPIPAHRALLASKSEIFKNILDSDGCKTAPEYAITLQELNSEQLQALLEFLYTGTLASDKLEKNVYALFIAADKYMIHYLQELCEQYMLSSLDISSVLNVLDVSDLGSSKTLKEACVGFVVRNMDDVVFSDKYEPFSQKNQHLCVEITRAFLMETRSKRRD.

A compositionally biased stretch (basic and acidic residues) spans Gly-40–Asn-50. The segment at Gly-40 to Leu-66 is disordered. Over residues His-51 to Ser-64 the composition is skewed to low complexity. A BTB domain is found at Ala-111 to Lys-181.

It functions in the pathway protein modification; protein ubiquitination. In terms of biological role, may act as a substrate-specific adapter of an E3 ubiquitin-protein ligase complex (CUL3-RBX1-BTB) which mediates the ubiquitination and subsequent proteasomal degradation of target proteins. The polypeptide is BTB/POZ domain-containing protein At3g56230 (Arabidopsis thaliana (Mouse-ear cress)).